We begin with the raw amino-acid sequence, 755 residues long: Sentrin-specific protease 5 (755 aa).

Residues 268–321 (VQKVTGDHQETRRENGEGGSCSPFPSPEPKDPSCRHQPYFPDMDSSAVVKGTNS) are disordered. Positions 272–283 (TGDHQETRRENG) are enriched in basic and acidic residues. The protease stretch occupies residues 567 to 724 (HMLDMDDLAT…VFVLQYCKCL (158 aa)). Catalysis depends on residues histidine 646, aspartate 663, and cysteine 713.

Belongs to the peptidase C48 family. As to quaternary structure, interacts with CCAR2.

The protein resides in the nucleus. Its subcellular location is the nucleolus. Protease that catalyzes two essential functions in the SUMO pathway: processing of full-length SUMO3 to its mature form and deconjugation of SUMO2 and SUMO3 from targeted proteins. Has weak proteolytic activity against full-length SUMO1 or SUMO1 conjugates. Required for cell division. This Homo sapiens (Human) protein is Sentrin-specific protease 5 (SENP5).